Consider the following 292-residue polypeptide: Potassium channel, subfamily K, member 16 (292 aa).

The Cytoplasmic portion of the chain corresponds to methionine 1 to glutamine 13. Residues valine 14–leucine 34 form a helical membrane-spanning segment. The pore-forming intramembrane region spans serine 98–proline 116. K(+) contacts are provided by threonine 108, isoleucine 109, glycine 110, and tyrosine 111. The tract at residues threonine 108 to asparagine 113 is selectivity filter 1. A helical membrane pass occupies residues alanine 120 to leucine 140. Residues asparagine 141 to glutamine 165 lie on the Cytoplasmic side of the membrane. A helical transmembrane segment spans residues leucine 166 to phenylalanine 186. The segment at residues glycine 202–glycine 221 is an intramembrane region (pore-forming). Positions 212, 213, 214, and 215 each coordinate K(+). The interval threonine 212–aspartate 217 is selectivity filter 2. The helical transmembrane segment at isoleucine 238–leucine 258 threads the bilayer. The Cytoplasmic portion of the chain corresponds to histidine 259 to alanine 292.

Belongs to the two pore domain potassium channel (TC 1.A.1.8) family. In terms of assembly, homodimer; disulfide-linked. Heterodimer with KCNK17 and KCNK5. As to expression, expressed in pacreatic beta-cells (at protein level). Expressed in pacreatic delta-cells (at protein level).

It is found in the cell membrane. The protein resides in the endoplasmic reticulum membrane. It localises to the mitochondrion inner membrane. The catalysed reaction is K(+)(in) = K(+)(out). It catalyses the reaction Rb(+)(in) = Rb(+)(out). The enzyme catalyses Cs(+)(in) = Cs(+)(out). Functionally, k(+) channel that conducts voltage-dependent outward rectifying currents upon membrane depolarization. Voltage sensing is coupled to K(+) electrochemical gradient in an 'ion flux gating' mode where outward but not inward ion flow opens the gate. Homo- and heterodimerizes to form functional channels with distinct regulatory and gating properties. In pancreatic islets, conducts K(+) countercurrents for Ca(2+) release from the endoplasmic reticulum (ER) and regulates the frequency and duration of cytosolic Ca(2+) oscillations coupled to secretion of pancreatic hormones. In pancreatic beta cells, drives ER Ca(2+) efflux, which in turn activates Ca(2+)-dependent plasma membrane K(+) slow currents and cytosolic Ca(2+) influx, overall contributing to synchronous cytosolic Ca(2+) oscillations. Limits glucose-induced cytosolic Ca(2+) oscillations coupled to second-phase INS secretion. Contributes to beta cell adaptation to acute inflammation by maintaining normal cytosolic Ca(2+) levels and INS secretion. May regulate beta cell mitochondrial Ca(2+) levels either indirectly via ER Ca(2+) efflux or directly by hyperpolarizing the mitochondrial membrane potential. Limits mitochondrial Ca(2+) oscillations and ATP production involved in glucose homeostasis upon metabolic stress. In pancreatic delta cells, limits Ca(2+)-induced Ca(2+)-release involved in somatostatin secretion and modulates islet paracrine signaling involved in glucagon secretion. Permeable to other monovalent cations such as Rb(+) and Cs(+). The protein is Potassium channel, subfamily K, member 16 of Mus musculus (Mouse).